A 418-amino-acid polypeptide reads, in one-letter code: Tyrosine--tRNA ligase (418 aa).

Residue Tyr34 participates in L-tyrosine binding. The 'HIGH' region motif lies at 39-48; that stretch reads PTADSLHLGH. The L-tyrosine site is built by Tyr169 and Gln173. The 'KMSKS' region signature appears at 229–233; it reads KFGKS. Residue Lys232 coordinates ATP. The S4 RNA-binding domain occupies 352–418; the sequence is LNLVDMLVTA…GKKKYAVLTY (67 aa).

The protein belongs to the class-I aminoacyl-tRNA synthetase family. TyrS type 1 subfamily. In terms of assembly, homodimer.

It localises to the cytoplasm. It catalyses the reaction tRNA(Tyr) + L-tyrosine + ATP = L-tyrosyl-tRNA(Tyr) + AMP + diphosphate + H(+). In terms of biological role, catalyzes the attachment of tyrosine to tRNA(Tyr) in a two-step reaction: tyrosine is first activated by ATP to form Tyr-AMP and then transferred to the acceptor end of tRNA(Tyr). This chain is Tyrosine--tRNA ligase, found in Streptococcus pyogenes serotype M5 (strain Manfredo).